The primary structure comprises 46 residues: Daisho2 (46 aa).

Residues 1 to 22 (MNCLKICGFFFALIAALATAEA) form the signal peptide.

Hemolymph (at protein level).

It localises to the secreted. Functionally, peptide which plays a role in the humoral immune response to a subset of filamentous fungi, including F.oxysporum and F.verticillioides. The sequence is that of Daisho2 from Drosophila melanogaster (Fruit fly).